The sequence spans 412 residues: MAFYASKAMRAAALAAAVALALSSCGKGGDAAQGGQPAGREAPAPVVGVVTVHPQTVALTVELPGRLESLRTADVRAQVGGIIQKRLFQEGSYVRAGQPLYQIDSSTYEAGLESARAQLATAQATLAKADADLARYKPLVSADAISKQEYDAAVTAKRSAEASVKAAQAAIKSAGINLNRSRITAPISGFIGQSKVSEGTLLNAGDTTVLATIRQTNPMYVNVTQSASEVMKLRRQIAEGKLLAADGAIAVGIKFDDGTVYPEKGRLLFADPTVDESTGQITLRAAVSNDQNILMPGLYVRVLMDQVAADNAFIVPQQAVTRGAKDTVMIVNAQGGMEPREVTVAQQQGTNWIVTSGLKDGDKVVVEGISIAGMTGAKKVTPKEWAPSENQAAAPQAGVQTASEAKPASEAK.

Residues 1–24 form the signal peptide; sequence MAFYASKAMRAAALAAAVALALSS. Residue Cys25 is the site of N-palmitoyl cysteine attachment. Cys25 carries S-diacylglycerol cysteine lipidation. Positions 377–412 are disordered; that stretch reads AKKVTPKEWAPSENQAAAPQAGVQTASEAKPASEAK. Residues 388-403 show a composition bias toward polar residues; it reads SENQAAAPQAGVQTAS.

This sequence belongs to the membrane fusion protein (MFP) (TC 8.A.1) family.

It is found in the cell inner membrane. Functionally, cell membrane lipoprotein, involved in cell membrane permeability to hydrophobic compounds such as antibiotics, dyes and detergents. In Neisseria gonorrhoeae, this protein is Membrane fusion protein MtrC (mtrC).